We begin with the raw amino-acid sequence, 173 residues long: Copper transport protein ctr5 (173 aa).

The Extracellular portion of the chain corresponds to 1-54; the sequence is MSLSKMSMSGMSGMGMGSSSNSSAATCRMSMLWNWYIHDSCFLAKSWHINTGNK. A helical transmembrane segment spans residues 55 to 75; it reads FAGSIIGIFFFAVAIEGLSLV. Residues 76-135 lie on the Cytoplasmic side of the membrane; the sequence is QRMFDRWIVAHSNGKTLSGPLRIFFPSSTVHVTVWQQLIRAAMYSSFYLSATILMLIVMS. A helical transmembrane segment spans residues 136 to 156; sequence FNGYAILFGFVGAWIGFFLFA. Residues 157–173 lie on the Extracellular side of the membrane; sequence SDTYGTPSTGTGCCESR.

This sequence belongs to the copper transporter (Ctr) (TC 1.A.56) family. SLC31A subfamily. Interacts with ctr4.

Its subcellular location is the membrane. Required for high affinity copper (probably reduced Cu I) transport into the cell. The protein is Copper transport protein ctr5 (ctr5) of Schizosaccharomyces pombe (strain 972 / ATCC 24843) (Fission yeast).